The following is a 72-amino-acid chain: Translation initiation factor IF-1 (72 aa).

Residues 1–72 (MIKEDNIEMH…SKGRIIFRSR (72 aa)) enclose the S1-like domain.

It belongs to the IF-1 family. In terms of assembly, component of the 30S ribosomal translation pre-initiation complex which assembles on the 30S ribosome in the order IF-2 and IF-3, IF-1 and N-formylmethionyl-tRNA(fMet); mRNA recruitment can occur at any time during PIC assembly.

It is found in the cytoplasm. One of the essential components for the initiation of protein synthesis. Stabilizes the binding of IF-2 and IF-3 on the 30S subunit to which N-formylmethionyl-tRNA(fMet) subsequently binds. Helps modulate mRNA selection, yielding the 30S pre-initiation complex (PIC). Upon addition of the 50S ribosomal subunit IF-1, IF-2 and IF-3 are released leaving the mature 70S translation initiation complex. This chain is Translation initiation factor IF-1, found in Blochmanniella floridana.